Here is a 409-residue protein sequence, read N- to C-terminus: Elongation factor Tu, chloroplastic (409 aa).

Residues 10-214 (KPHINIGTIG…QVDSYIPTPT (205 aa)) enclose the tr-type G domain. The segment at 19 to 26 (GHVDHGKT) is G1. Residue 19–26 (GHVDHGKT) participates in GTP binding. T26 is a Mg(2+) binding site. Position 57 is an N6-methyllysine (K57). Residues 60 to 64 (GITIN) are G2. Residues 81 to 84 (DCPG) are G3. GTP is bound by residues 81-85 (DCPGH) and 136-139 (NKED). The tract at residues 136–139 (NKED) is G4. The interval 174-176 (SAL) is G5.

Belongs to the TRAFAC class translation factor GTPase superfamily. Classic translation factor GTPase family. EF-Tu/EF-1A subfamily.

It localises to the plastid. Its subcellular location is the chloroplast. It catalyses the reaction GTP + H2O = GDP + phosphate + H(+). In terms of biological role, GTP hydrolase that promotes the GTP-dependent binding of aminoacyl-tRNA to the A-site of ribosomes during protein biosynthesis. This chain is Elongation factor Tu, chloroplastic (tufA), found in Euglena gracilis.